The following is a 638-amino-acid chain: Chaperone protein HtpG (638 aa).

The a; substrate-binding stretch occupies residues 1-346 (MSQQETHGFQ…SNDLPLNVSR (346 aa)). Residues 347 to 563 (EILQDNKVTT…EGEMSTQMIK (217 aa)) are b. The interval 564–638 (LMQAAGQDVP…MNQMLLASVK (75 aa)) is c.

This sequence belongs to the heat shock protein 90 family. In terms of assembly, homodimer.

Its subcellular location is the cytoplasm. Its function is as follows. Molecular chaperone. Has ATPase activity. The chain is Chaperone protein HtpG from Shewanella pealeana (strain ATCC 700345 / ANG-SQ1).